The following is a 434-amino-acid chain: Gamma-glutamyl phosphate reductase (434 aa).

This sequence belongs to the gamma-glutamyl phosphate reductase family.

It is found in the cytoplasm. It catalyses the reaction L-glutamate 5-semialdehyde + phosphate + NADP(+) = L-glutamyl 5-phosphate + NADPH + H(+). It functions in the pathway amino-acid biosynthesis; L-proline biosynthesis; L-glutamate 5-semialdehyde from L-glutamate: step 2/2. In terms of biological role, catalyzes the NADPH-dependent reduction of L-glutamate 5-phosphate into L-glutamate 5-semialdehyde and phosphate. The product spontaneously undergoes cyclization to form 1-pyrroline-5-carboxylate. The protein is Gamma-glutamyl phosphate reductase of Pelotomaculum thermopropionicum (strain DSM 13744 / JCM 10971 / SI).